We begin with the raw amino-acid sequence, 310 residues long: DNA repair nuclease APEX1 (310 aa).

Residues 1-51 form a disordered region; it reads MPKRAKKNEEGVDGEADNGTAAAKKEKKGKEPEAPILYEDPPEKLTSKDGR. Basic and acidic residues predominate over residues 41 to 51; the sequence is PPEKLTSKDGR. Residues Asp-63 and Glu-89 each coordinate Mg(2+). Tyr-164 is a catalytic residue. Residues Asp-203, Asn-205, and Asp-300 each contribute to the Mg(2+) site. Catalysis depends on Asp-203, which acts as the Proton donor/acceptor.

The protein belongs to the DNA repair enzymes AP/ExoA family. Requires Mg(2+) as cofactor. Mn(2+) is required as a cofactor.

Its subcellular location is the nucleus. It localises to the nucleolus. The protein localises to the nucleus speckle. The protein resides in the endoplasmic reticulum. It is found in the cytoplasm. Its subcellular location is the mitochondrion. It carries out the reaction Exonucleolytic cleavage in the 3'- to 5'-direction to yield nucleoside 5'-phosphates.. Its function is as follows. Functions as an apurinic/apyrimidinic (AP) endodeoxyribonuclease in the DNA base excision repair (BER) pathway of DNA lesions induced by oxidative and alkylating agents. Initiates repair of AP sites in DNA by catalyzing hydrolytic incision of the phosphodiester backbone immediately adjacent to the damage, generating a single-strand break with 5'-deoxyribose phosphate and 3'-hydroxyl ends. Has 3'-5' exoribonuclease activity on mismatched deoxyribonucleotides at the 3' termini of nicked or gapped DNA molecules during short-patch BER. May also play a role in the epigenetic regulation of gene expression by participating in DNA demethylation. Required for passage through the mid-blastula transition MBT. May also act as an endoribonuclease involved in the control of single-stranded RNA metabolism. Has no redox activity. Binds DNA and RNA. In Danio rerio (Zebrafish), this protein is DNA repair nuclease APEX1 (apex1).